A 345-amino-acid polypeptide reads, in one-letter code: Probable fructokinase-3 (345 aa).

The protein belongs to the carbohydrate kinase PfkB family.

The enzyme catalyses D-fructose + ATP = D-fructose 6-phosphate + ADP + H(+). It functions in the pathway glycan biosynthesis; starch biosynthesis. In terms of biological role, may play an important role in maintaining the flux of carbon towards starch formation. In Arabidopsis thaliana (Mouse-ear cress), this protein is Probable fructokinase-3.